The following is a 70-amino-acid chain: Non-histone chromosomal protein H6 (70 aa).

The interval 1 to 70 (MPKRKSATKG…AAGDGAGNAK (70 aa)) is disordered. The span at 30–45 (AKPKKAAAPKKAVKGK) shows a compositional bias: basic residues. Positions 46–57 (KAAENGDAKAEA) are enriched in basic and acidic residues.

This sequence belongs to the HMGN family.

The protein localises to the nucleus. Its subcellular location is the secreted. In terms of biological role, non-histone protein that probably binds to the inner side of nucleosomal DNA, altering the association between the DNA and the nucleosome octamer. Its function is as follows. Oncorhyncin III has antibacterial activity against Gram-positive and Gram-negative bacteria at submicromolar concentrations. In Oncorhynchus mykiss (Rainbow trout), this protein is Non-histone chromosomal protein H6.